Consider the following 395-residue polypeptide: S-adenosylmethionine synthase (395 aa).

Histidine 16 is a binding site for ATP. Residue aspartate 18 coordinates Mg(2+). Residue glutamate 44 coordinates K(+). Residues glutamate 57 and glutamine 100 each coordinate L-methionine. Positions 100 to 110 (QSPDIAQGVDR) are flexible loop. ATP contacts are provided by residues 167–169 (DAK), 233–234 (RF), aspartate 242, 248–249 (RK), alanine 265, and lysine 269. Aspartate 242 contributes to the L-methionine binding site. Lysine 273 provides a ligand contact to L-methionine.

Belongs to the AdoMet synthase family. As to quaternary structure, homotetramer; dimer of dimers. Mg(2+) is required as a cofactor. The cofactor is K(+).

The protein resides in the cytoplasm. The enzyme catalyses L-methionine + ATP + H2O = S-adenosyl-L-methionine + phosphate + diphosphate. The protein operates within amino-acid biosynthesis; S-adenosyl-L-methionine biosynthesis; S-adenosyl-L-methionine from L-methionine: step 1/1. Functionally, catalyzes the formation of S-adenosylmethionine (AdoMet) from methionine and ATP. The overall synthetic reaction is composed of two sequential steps, AdoMet formation and the subsequent tripolyphosphate hydrolysis which occurs prior to release of AdoMet from the enzyme. The chain is S-adenosylmethionine synthase from Burkholderia mallei (strain NCTC 10247).